We begin with the raw amino-acid sequence, 128 residues long: Large-conductance mechanosensitive channel (128 aa).

The Cytoplasmic segment spans residues 1–16; that stretch reads MNFIKEFREFAMRGNV. The helical transmembrane segment at 17–45 threads the bilayer; it reads VDMAVGVIIGSAFGKIVSSLVSDIFTPVL. Over 46-74 the chain is Periplasmic; the sequence is GILTGGIDFKDMKFVLAQAQGDVPAVTLN. Residues 75–94 form a helical membrane-spanning segment; it reads YGLFIQNVIDFIIIAFAIFM. Residues 95-128 are Cytoplasmic-facing; that stretch reads MIKVINKVRKPEEKKTAPKAETLLTEIRDLLKNK.

This sequence belongs to the MscL family. As to quaternary structure, homopentamer.

Its subcellular location is the cell inner membrane. Functionally, channel that opens in response to stretch forces in the membrane lipid bilayer. Forms a nonselective ion channel with a conductance of about 4 nanosiemens. May participate in the regulation of osmotic pressure changes within the cell. This Haemophilus influenzae (strain ATCC 51907 / DSM 11121 / KW20 / Rd) protein is Large-conductance mechanosensitive channel.